We begin with the raw amino-acid sequence, 459 residues long: Cysteine--tRNA ligase (459 aa).

C27 is a binding site for Zn(2+). A 'HIGH' region motif is present at residues 29-39; that stretch reads PTVYDDAHLGH. Zn(2+) is bound by residues C202, H231, and E235. The 'KMSKS' region signature appears at 263–267; it reads KMSKS. K266 provides a ligand contact to ATP.

It belongs to the class-I aminoacyl-tRNA synthetase family. In terms of assembly, monomer. It depends on Zn(2+) as a cofactor.

It is found in the cytoplasm. The enzyme catalyses tRNA(Cys) + L-cysteine + ATP = L-cysteinyl-tRNA(Cys) + AMP + diphosphate. The protein is Cysteine--tRNA ligase of Campylobacter fetus subsp. fetus (strain 82-40).